The sequence spans 185 residues: Ribosome maturation factor RimM (185 aa).

Residues 92–168 (DDDTFYHADL…GRRVVVAEAF (77 aa)) enclose the PRC barrel domain.

The protein belongs to the RimM family. Binds ribosomal protein uS19.

It localises to the cytoplasm. In terms of biological role, an accessory protein needed during the final step in the assembly of 30S ribosomal subunit, possibly for assembly of the head region. Essential for efficient processing of 16S rRNA. May be needed both before and after RbfA during the maturation of 16S rRNA. It has affinity for free ribosomal 30S subunits but not for 70S ribosomes. This is Ribosome maturation factor RimM from Xanthobacter autotrophicus (strain ATCC BAA-1158 / Py2).